The chain runs to 65 residues: Large ribosomal subunit protein uL29 (65 aa).

Belongs to the universal ribosomal protein uL29 family.

The polypeptide is Large ribosomal subunit protein uL29 (rpmC) (Buchnera aphidicola subsp. Acyrthosiphon pisum (strain APS) (Acyrthosiphon pisum symbiotic bacterium)).